Consider the following 340-residue polypeptide: Anthranilate phosphoribosyltransferase (340 aa).

Residues G84, 87–88, T92, 94–97, 112–120, and S124 each bind 5-phospho-alpha-D-ribose 1-diphosphate; these read GD, NIST, and KHGSRSVSS. G84 contacts anthranilate. S96 is a binding site for Mg(2+). Residue R170 coordinates anthranilate. Positions 228 and 229 each coordinate Mg(2+).

It belongs to the anthranilate phosphoribosyltransferase family. Homodimer. It depends on Mg(2+) as a cofactor.

The enzyme catalyses N-(5-phospho-beta-D-ribosyl)anthranilate + diphosphate = 5-phospho-alpha-D-ribose 1-diphosphate + anthranilate. It participates in amino-acid biosynthesis; L-tryptophan biosynthesis; L-tryptophan from chorismate: step 2/5. Catalyzes the transfer of the phosphoribosyl group of 5-phosphorylribose-1-pyrophosphate (PRPP) to anthranilate to yield N-(5'-phosphoribosyl)-anthranilate (PRA). The chain is Anthranilate phosphoribosyltransferase from Psychromonas ingrahamii (strain DSM 17664 / CCUG 51855 / 37).